The primary structure comprises 79 residues: MKVASIFLLTALVLMSLSGNSGANILGREAKCTNEVNGCPRIYNPVCGTDGVTYSNECLLCMENKERQTPVLIQKSGPC.

The N-terminal stretch at 1–23 is a signal peptide; that stretch reads MKVASIFLLTALVLMSLSGNSGA. The Kazal-like domain maps to 26 to 79; sequence LGREAKCTNEVNGCPRIYNPVCGTDGVTYSNECLLCMENKERQTPVLIQKSGPC. 3 disulfide bridges follow: Cys-32-Cys-61, Cys-39-Cys-58, and Cys-47-Cys-79.

It localises to the secreted. Serine protease inhibitor which exhibits anti-trypsin activity. In the pancreas, protects against trypsin-catalyzed premature activation of zymogens. Its function is as follows. In the male reproductive tract, binds to sperm heads where it modulates sperm capacitance by inhibiting calcium uptake and nitrogen oxide (NO) production. The polypeptide is Serine protease inhibitor Kazal-type 1 (SPINK1) (Bos taurus (Bovine)).